We begin with the raw amino-acid sequence, 99 residues long: MLNKNKRWYLIALYDIYQGLLTTKQCEYFNLHYFKDLSFSEIAELKEVSKSAISDCLNKVCDQLLKYEQALLIYEKNKKRNDLYTLINDSELVKKLKDI.

This sequence belongs to the UPF0122 family.

Might take part in the signal recognition particle (SRP) pathway. This is inferred from the conservation of its genetic proximity to ftsY/ffh. May be a regulatory protein. The polypeptide is UPF0122 protein UUR10_0158 (Ureaplasma urealyticum serovar 10 (strain ATCC 33699 / Western)).